Consider the following 584-residue polypeptide: Tyrosine-protein kinase Dnt (584 aa).

Positions 1-40 (MESVNKCGKSASTRNCTVKMSRKMWVLSLLALAALQLHSG) are cleaved as a signal peptide. Residues 41 to 208 (SEVAAHLNVF…LETVMLPPTG (168 aa)) are Extracellular-facing. One can recognise a WIF domain in the interval 49-180 (VFLNPVEVMR…HLVFRRKKIC (132 aa)). N-linked (GlcNAc...) asparagine glycosylation is found at Asn124, Asn163, Asn168, and Asn183. The helical transmembrane segment at 209-229 (LITLVVGVSVAMGSVCLLLMI) threads the bilayer. Topologically, residues 230-584 (AYCVKGAANK…EFYSQITRYV (355 aa)) are cytoplasmic. The disordered stretch occupies residues 241–261 (QHHQHGGQPMRTSSFQRLNTH). The span at 250 to 261 (MRTSSFQRLNTH) shows a compositional bias: polar residues. A Protein kinase domain is found at 317–577 (VRLSSLLQEG…QLQSCLSEFY (261 aa)). ATP is bound by residues 323-331 (LQEGTFGRV) and Lys345. The Proton acceptor role is filled by Asp442. Residue Tyr472 is modified to Phosphotyrosine; by autocatalysis.

The protein belongs to the protein kinase superfamily. Tyr protein kinase family. Expressed in dynamic domains in the embryonic epidermis, many of which border on sites of epithelial invagination into the embryo interior, including ventral furrow, cephalic furrow, fore- and hindgut, optic lobe and tracheal pits. Later in embryogenesis, expression is seen in imaginal tissues.

The protein localises to the cell membrane. It carries out the reaction L-tyrosyl-[protein] + ATP = O-phospho-L-tyrosyl-[protein] + ADP + H(+). Functionally, may play an essential role in neuronal pathway recognition and ventral muscle attachment site selection. This is Tyrosine-protein kinase Dnt (dnt) from Drosophila melanogaster (Fruit fly).